Reading from the N-terminus, the 272-residue chain is NAD kinase (272 aa).

The active-site Proton acceptor is the Asp62. Residues 62-63 (DG), Arg67, 129-130 (NE), Arg140, Lys157, Asp159, 170-175 (SSYSSS), Ala194, and Gln229 each bind NAD(+).

It belongs to the NAD kinase family. It depends on a divalent metal cation as a cofactor.

It localises to the cytoplasm. It carries out the reaction NAD(+) + ATP = ADP + NADP(+) + H(+). Functionally, involved in the regulation of the intracellular balance of NAD and NADP, and is a key enzyme in the biosynthesis of NADP. Catalyzes specifically the phosphorylation on 2'-hydroxyl of the adenosine moiety of NAD to yield NADP. This Thermoplasma volcanium (strain ATCC 51530 / DSM 4299 / JCM 9571 / NBRC 15438 / GSS1) protein is NAD kinase.